Consider the following 384-residue polypeptide: 8-amino-7-oxononanoate synthase (384 aa).

Residue arginine 21 coordinates substrate. Residue 108–109 participates in pyridoxal 5'-phosphate binding; the sequence is GF. Histidine 133 provides a ligand contact to substrate. The pyridoxal 5'-phosphate site is built by serine 179, histidine 207, and threonine 233. An N6-(pyridoxal phosphate)lysine modification is found at lysine 236. Threonine 350 is a binding site for substrate.

Belongs to the class-II pyridoxal-phosphate-dependent aminotransferase family. BioF subfamily. As to quaternary structure, homodimer. Pyridoxal 5'-phosphate serves as cofactor.

It catalyses the reaction 6-carboxyhexanoyl-[ACP] + L-alanine + H(+) = (8S)-8-amino-7-oxononanoate + holo-[ACP] + CO2. It functions in the pathway cofactor biosynthesis; biotin biosynthesis. Catalyzes the decarboxylative condensation of pimeloyl-[acyl-carrier protein] and L-alanine to produce 8-amino-7-oxononanoate (AON), [acyl-carrier protein], and carbon dioxide. This is 8-amino-7-oxononanoate synthase from Erwinia tasmaniensis (strain DSM 17950 / CFBP 7177 / CIP 109463 / NCPPB 4357 / Et1/99).